Reading from the N-terminus, the 242-residue chain is DNA repair protein RecO (242 aa).

This sequence belongs to the RecO family. In terms of assembly, monomer.

Its function is as follows. Involved in DNA repair and RecF pathway recombination. In Shigella flexneri, this protein is DNA repair protein RecO.